A 136-amino-acid chain; its full sequence is MNSSSKNAVVYWGTGRRKTSVARVRLIPGTGKITINGRPGDHYLNFNPAYLSAVKAPLHTLGLGEAYDVLVNVYGGGLTGQSDAIKQGAARALCELSVDNRKPLKTEGHLSRDPRAKERRKYGLKKARKAPQFSKR.

Positions 103-116 (PLKTEGHLSRDPRA) are enriched in basic and acidic residues. Residues 103–136 (PLKTEGHLSRDPRAKERRKYGLKKARKAPQFSKR) are disordered. Residues 117-136 (KERRKYGLKKARKAPQFSKR) show a composition bias toward basic residues.

Belongs to the universal ribosomal protein uS9 family.

This Prochlorococcus marinus (strain SARG / CCMP1375 / SS120) protein is Small ribosomal subunit protein uS9 (rpsI).